Consider the following 385-residue polypeptide: Multidrug resistance protein MdtE (385 aa).

Residues 1–20 (MNRRRKLLIPLLFCGAMLTA) form the signal peptide. Cys-21 is lipidated: N-palmitoyl cysteine. Cys-21 is lipidated: S-diacylglycerol cysteine.

The protein belongs to the membrane fusion protein (MFP) (TC 8.A.1) family. Homotrimer. Part of the tripartite efflux system MdtEF-TolC, which is composed of an inner membrane transporter, MdtF, a membrane fusion protein, MdtE, and an outer membrane component, TolC. The complex forms a large protein conduit and can translocate molecules across both the inner and outer membranes.

It localises to the cell inner membrane. Part of the tripartite efflux system MdtEF-TolC, which confers resistance to various compounds. In Escherichia coli O6:H1 (strain CFT073 / ATCC 700928 / UPEC), this protein is Multidrug resistance protein MdtE (mdtE).